Reading from the N-terminus, the 131-residue chain is Large ribosomal subunit protein bL17 (131 aa).

It belongs to the bacterial ribosomal protein bL17 family. As to quaternary structure, part of the 50S ribosomal subunit. Contacts protein L32.

The protein is Large ribosomal subunit protein bL17 of Hamiltonella defensa subsp. Acyrthosiphon pisum (strain 5AT).